The sequence spans 93 residues: Putative membrane protein insertion efficiency factor (93 aa).

The segment at 72-93 is disordered; that stretch reads VPEHFPSWRGPHPKTPSRKTPE. Basic residues predominate over residues 82–93; that stretch reads PHPKTPSRKTPE.

It belongs to the UPF0161 family.

The protein resides in the cell membrane. Functionally, could be involved in insertion of integral membrane proteins into the membrane. The chain is Putative membrane protein insertion efficiency factor from Deinococcus geothermalis (strain DSM 11300 / CIP 105573 / AG-3a).